A 398-amino-acid chain; its full sequence is Lysophospholipid transporter LplT (398 aa).

11 consecutive transmembrane segments (helical) span residues 19 to 39 (VIAAQFLSAFGDNALLFATLA), 53 to 73 (ILQMVFVGAYILFAPFVGQVA), 91 to 111 (LGAASICFGFNPFVGYTLVGI), 139 to 159 (LMEASTIAAILLGSVAGGVLA), 164 to 184 (IAALVACALAYAGAVVANLFI), 227 to 247 (LFWGAGVTLRFLLVLWVPVAL), 257 to 277 (YLNAMVAIGIVVGAGAAAKLV), 281 to 301 (TVARCMPAGILIGVVVLIFSL), 304 to 324 (ALLPAYALLTLIGVLGGFFVV), 350 to 370 (GENSAMLLMLGLYSLAVLVGI), and 372 to 392 (VVAIGIGFGGLFALAIAALWI).

It belongs to the major facilitator superfamily. LplT (TC 2.A.1.42) family.

It localises to the cell inner membrane. Its function is as follows. Catalyzes the facilitated diffusion of 2-acyl-glycero-3-phosphoethanolamine (2-acyl-GPE) into the cell. The sequence is that of Lysophospholipid transporter LplT from Citrobacter koseri (strain ATCC BAA-895 / CDC 4225-83 / SGSC4696).